Reading from the N-terminus, the 288-residue chain is MDKLIKTISESGSFRAYALDSTETVRTAQEKHNTLSSSTVALGRTLIANQILAANQKGDSKITVKVIGNGSFGHIISVADTKGHVKGYIQNPGVDIKKTATGEVLVGPFMGQGQFVSIIDYGTGNPYTSSTPLISGEIGEDFAYYLTESEQTPSAVGLNVLLDKEDKVKVAGGFMLQVLPGASEEEIARYEKRIQEMPAISTLLESDDHIEALLNAIYGDEPFKRLSEEELSFECDCSRERFENALLTLGKDELQAIKDEDHGAEIVCQFCQTKYEFSEADLEELIND.

2 cysteine pairs are disulfide-bonded: Cys235–Cys237 and Cys268–Cys271.

The protein belongs to the HSP33 family. Under oxidizing conditions two disulfide bonds are formed involving the reactive cysteines. Under reducing conditions zinc is bound to the reactive cysteines and the protein is inactive.

Its subcellular location is the cytoplasm. Its function is as follows. Redox regulated molecular chaperone. Protects both thermally unfolding and oxidatively damaged proteins from irreversible aggregation. Plays an important role in the bacterial defense system toward oxidative stress. This chain is 33 kDa chaperonin, found in Streptococcus thermophilus (strain CNRZ 1066).